We begin with the raw amino-acid sequence, 643 residues long: Threonine--tRNA ligase (643 aa).

The region spanning 1–61 (MIKVTLKDGS…KEDVSLSICT (61 aa)) is the TGS domain. Positions 240–540 (DHNKLGRELK…LIEKYAGAFP (301 aa)) are catalytic. The Zn(2+) site is built by Cys-335, His-386, and His-517.

Belongs to the class-II aminoacyl-tRNA synthetase family. In terms of assembly, homodimer. Zn(2+) serves as cofactor.

The protein localises to the cytoplasm. It catalyses the reaction tRNA(Thr) + L-threonine + ATP = L-threonyl-tRNA(Thr) + AMP + diphosphate + H(+). Functionally, catalyzes the attachment of threonine to tRNA(Thr) in a two-step reaction: L-threonine is first activated by ATP to form Thr-AMP and then transferred to the acceptor end of tRNA(Thr). Also edits incorrectly charged L-seryl-tRNA(Thr). In Clostridium botulinum (strain Eklund 17B / Type B), this protein is Threonine--tRNA ligase.